Reading from the N-terminus, the 372-residue chain is Glutamate 5-kinase (372 aa).

K14 serves as a coordination point for ATP. Residues S54, D141, and N153 each coordinate substrate. 173–174 (TD) is a binding site for ATP. Residues 280–358 (RGTLVLDDGA…EAIVRELGYM (79 aa)) enclose the PUA domain.

The protein belongs to the glutamate 5-kinase family.

Its subcellular location is the cytoplasm. The enzyme catalyses L-glutamate + ATP = L-glutamyl 5-phosphate + ADP. It participates in amino-acid biosynthesis; L-proline biosynthesis; L-glutamate 5-semialdehyde from L-glutamate: step 1/2. Functionally, catalyzes the transfer of a phosphate group to glutamate to form L-glutamate 5-phosphate. The sequence is that of Glutamate 5-kinase from Pseudomonas syringae pv. tomato (strain ATCC BAA-871 / DC3000).